The following is a 318-amino-acid chain: Homeobox-leucine zipper protein ATHB-4 (318 aa).

2 disordered regions span residues Met-1–Ser-23 and Ala-128–Leu-165. Residues Leu-8–Ser-17 show a composition bias toward low complexity. The span at Ala-128 to Ser-140 shows a compositional bias: basic and acidic residues. The homeobox DNA-binding region spans Gly-160–Gln-219. Positions Leu-227–Leu-248 are leucine-zipper.

This sequence belongs to the HD-ZIP homeobox family. Class II subfamily.

It is found in the nucleus. In terms of biological role, probable transcription factor. The polypeptide is Homeobox-leucine zipper protein ATHB-4 (ATHB-4) (Arabidopsis thaliana (Mouse-ear cress)).